Reading from the N-terminus, the 347-residue chain is Probable E3 ubiquitin-protein ligase DTX3 (347 aa).

The tract at residues 111 to 157 (GGEHPELHRPGPPPLRAAPLLPPGARGLPPPPPPLPPPLPPRLREDA) is disordered. Pro residues predominate over residues 120-151 (PGPPPLRAAPLLPPGARGLPPPPPPLPPPLPP). Residues 164–205 (CPICLGEIQNAKTLEKCRHSFCEGCITRALQVKKACPMCGRF) form an RING-type zinc finger.

Belongs to the Deltex family. In terms of assembly, homodimer. May form a heterodimer with other members of the Deltex family. Interacts with NOTCH1. Strongly expressed in testis and brain. Weakly expressed in kidney.

Its subcellular location is the cytoplasm. The catalysed reaction is S-ubiquitinyl-[E2 ubiquitin-conjugating enzyme]-L-cysteine + [acceptor protein]-L-lysine = [E2 ubiquitin-conjugating enzyme]-L-cysteine + N(6)-ubiquitinyl-[acceptor protein]-L-lysine.. Its pathway is protein modification; protein ubiquitination. Its function is as follows. Regulator of Notch signaling, a signaling pathway involved in cell-cell communications that regulates a broad spectrum of cell-fate determinations. Probably acts both as a positive and negative regulator of Notch, depending on the developmental and cell context. Functions as a ubiquitin ligase protein in vitro, suggesting that it may regulate the Notch pathway via some ubiquitin ligase activity. In Mus musculus (Mouse), this protein is Probable E3 ubiquitin-protein ligase DTX3 (Dtx3).